Consider the following 288-residue polypeptide: Glycine--tRNA ligase alpha subunit (288 aa).

Belongs to the class-II aminoacyl-tRNA synthetase family. In terms of assembly, tetramer of two alpha and two beta subunits.

The protein resides in the cytoplasm. It catalyses the reaction tRNA(Gly) + glycine + ATP = glycyl-tRNA(Gly) + AMP + diphosphate. This is Glycine--tRNA ligase alpha subunit from Rickettsia massiliae (strain Mtu5).